The primary structure comprises 1368 residues: METQLQSIFEEVVKTEVIEEAFPGMFMDTPEDEKTKLISCLGAFRQFWGGLSQESHEQCIQWIVKFIHGQHSPKRISFLYDCLAMAVETGLLPPRLVCESLINSDTLEWERTQLWALTFKLVRKIIGGVDYKGVRDLLKVILEKILTIPNTVSSAVVQQLLAAREVIAYILERNACLLPAYFAVTEIRKLYPEGKLPHWLLGNLVSDFVDTFRPTARINSICGRCSLLPVVNNSGAICNSWKLDPATLRFPLKGLLPYDKDLFEPQTALLRYVLEQPYSRDMVCNMLGLNKQHKQRCPVLEDQLVDLVVYAMERSETEEKFDDGGTSQLLWQHLSSQLIFFVLFQFASFPHMVLSLHQKLAGRGLIKGRDHLMWVLLQFISGSIQKNALADFLPVMKLFDLLYPEKEYIPVPDINKPQSTHAFAMTCIWIHLNRKAQNDNSKLQIPIPHSLRLHHEFLQQSLRNKSLQMNDYKIALLCNAYSTNSECFTLPMGALVETIYGNGIMRIPLPGTNCMASGSITPLPMNLLDSLTVHAKMSLIHSIATRVIKLAHAKSSVALAPALVETYSRLLVYMEIESLGIKGFISQLLPTVFKSHAWGILHTLLEMFSYRMHHIQPHYRVQLLSHLHTLAAVAQTNQNQLHLCVESTALRLITALGSSEVQPQFTRFLSDPKTVLSAESEELNRALILTLARATHVTDFFTGSDSIQGTWCKDILQTIMSFTPHNWASHTLSCFPGPLQAFFKQNNVPQESRFNLKKNVEEEYRKWKSMSNENDIITHFSMQGSPPLFLCLLWKMLLETDHINQIGYRVLERIGARALVAHVRTFADFLVYEFSTSAGGQQLNKCIEILNDMVWKYNIVTLDRLILCLAMRSHEGNEAQVCYFIIQLLLLKPNDFRNRVSDFVKENSPEHWLQNDWHTKHMNYHKKYPEKLYFEGLAEQVDPPVQIQSPYLPIYFGNVCLRFLPVFDIVIHRFLELLPVSKSLETLLDHLGGLYKFHDRPVTYLYNTLHYYEMHLRDRAFLKRKLVHAIIGSLKDNRPQGWCLSDTYLKCAMNAREENPWVPDDTYYCRLIGRLVDTMAGKSPGPFPNCDWRFNEFPNPAAHALHVTCVELMALAVSGKEVGNALLNVVLKSQPLVPRENITAWMNAIGLIITALPEPYWIVLHDRIVSVISSPSLTSETEWVGYPFRLFDFTACHQSYSEMSCSYTLALAHAVWHHSSIGQLSLIPKFLTEVLLPIVKTEFQLLYVYHLVGPFLQRFQQERTRCMIEIGVAFYDMLLNVDQCSTHLNYMDPICDFLYHMKYMFTGDSVKEQVEKIICNLKPALKLRLRFITHISKMEPAAVPPQAMNSGSPAPQSNQVPVSLPVTQ.

The disordered stretch occupies residues 1343–1368; it reads VPPQAMNSGSPAPQSNQVPVSLPVTQ. The segment covering 1347–1368 has biased composition (polar residues); that stretch reads AMNSGSPAPQSNQVPVSLPVTQ.

The protein belongs to the Mediator complex subunit 23 family. As to quaternary structure, interacts with ELK1. Component of the Mediator complex, which is composed of MED1, MED4, MED6, MED7, MED8, MED9, MED10, MED11, MED12, MED13, MED13L, MED14, MED15, MED16, MED17, MED18, MED19, MED20, MED21, MED22, MED23, MED24, MED25, MED26, MED27, MED29, MED30, MED31, CCNC, CDK8 and CDC2L6/CDK11. The MED12, MED13, CCNC and CDK8 subunits form a distinct module termed the CDK8 module. Mediator containing the CDK8 module is less active than Mediator lacking this module in supporting transcriptional activation. Individual preparations of the Mediator complex lacking one or more distinct subunits have been variously termed ARC, CRSP, DRIP, PC2, SMCC and TRAP. Interacts with CEBPB (when not methylated), CTNNB1, and GLI3. Interacts with the adenovirus E1A protein.

The protein localises to the nucleus. Required for transcriptional activation subsequent to the assembly of the pre-initiation complex. Component of the Mediator complex, a coactivator involved in the regulated transcription of nearly all RNA polymerase II-dependent genes. Mediator functions as a bridge to convey information from gene-specific regulatory proteins to the basal RNA polymerase II transcription machinery. Mediator is recruited to promoters by direct interactions with regulatory proteins and serves as a scaffold for the assembly of a functional pre-initiation complex with RNA polymerase II and the general transcription factors. Required for transcriptional activation by adenovirus E1A protein. Required for ELK1-dependent transcriptional activation in response to activated Ras signaling. The protein is Mediator of RNA polymerase II transcription subunit 23 (MED23) of Homo sapiens (Human).